A 391-amino-acid polypeptide reads, in one-letter code: Choline/ethanolaminephosphotransferase 1 (391 aa).

At 1 to 49 (MGYFVPDSHIENLKSYKYQSEDRSLVSKYFLKPFWQRFCHIFPTWMAPN) the chain is on the lumenal side. Residues 50–69 (IITLSGFAFIVINVLTVFYY) form a helical membrane-spanning segment. At 70–172 (DPNLNTDTPR…YHTHTLYLSE (103 aa)) the chain is on the cytoplasmic side. The helical transmembrane segment at 173–193 (FSGPVEGILIVCVSLILTGIY) threads the bilayer. Over 194-211 (GKQVIWHTYLFTITVGDK) the chain is Lumenal. A helical membrane pass occupies residues 212–232 (VIDVDTLDIVFSLAVFGLVMN). Residues 233–264 (ALSAKRNVDKYYRNSTSSANNITQIEQDSAIK) are Cytoplasmic-facing. A helical membrane pass occupies residues 265–282 (GLLPFFAYYASIALLVWM). Residues 283-285 (QPS) lie on the Lumenal side of the membrane. Residues 286–308 (FITLSFILSVGFTGAFTVGRIIV) traverse the membrane as a helical segment. Residues 309–321 (CHLTKQSFPMFNA) lie on the Cytoplasmic side of the membrane. Residues 322-342 (PMLIPLCQIVLYKICLSLWGI) form a helical membrane-spanning segment. The Lumenal segment spans residues 343 to 346 (ESNK). Residues 347 to 367 (IVFALSWLGFGLSLGVHIMFM) traverse the membrane as a helical segment. Residues 368-391 (NDIIHEFTEYLDVYALSIKRSKLT) are Cytoplasmic-facing.

Belongs to the CDP-alcohol phosphatidyltransferase class-I family. The cofactor is Mg(2+).

It is found in the golgi apparatus membrane. The catalysed reaction is CDP-ethanolamine + a 1,2-diacyl-sn-glycerol = a 1,2-diacyl-sn-glycero-3-phosphoethanolamine + CMP + H(+). The enzyme catalyses CDP-choline + a 1,2-diacyl-sn-glycerol = a 1,2-diacyl-sn-glycero-3-phosphocholine + CMP + H(+). It carries out the reaction CDP-N-methylethanolamine + a 1,2-diacyl-sn-glycerol = a 1,2-diacyl-sn-glycero-3-phospho-N-methylethanolamine + CMP + H(+). It catalyses the reaction CDP-N,N-dimethylethanolamine + a 1,2-diacyl-sn-glycerol = a 1,2-diacyl-sn-glycero-3-phospho-N,N-dimethylethanolamine + CMP + H(+). The catalysed reaction is 1,2-di-(9Z-octadecenoyl)-glycerol + CDP-choline = 1,2-di-(9Z-octadecenoyl)-sn-glycero-3-phosphocholine + CMP + H(+). The enzyme catalyses 1,2-di-(9Z-octadecenoyl)-glycerol + CDP-ethanolamine = 1,2-di-(9Z-octadecenoyl)-sn-glycero-3-phosphoethanolamine + CMP + H(+). It participates in phospholipid metabolism; phosphatidylethanolamine biosynthesis; phosphatidylethanolamine from ethanolamine: step 3/3. It functions in the pathway phospholipid metabolism; phosphatidylcholine biosynthesis; phosphatidylcholine from phosphocholine: step 2/2. Requires a divalent cation activator, and is inhibited by CMP. Activated by phospholipids, especially phosphatidylcholine. Its function is as follows. Catalyzes the final step in the CDP-ethanolamine route leading to phosphatidylethanolamine (PE). Can also catalyze the formation of phosphatidylcholine (PC) from CDP-choline, but does not substantially contribute to PC biosynthesis. Preferentially uses CDP-dimethylethanolamine and CDP-propanolamine as aminoalcohol substrates. Shows highest activity toward di-unsaturated diacylglycerol species as lipid substrates. The CDP-ethanolamine pathway may play a role in maintaining the proper PE species distribution. In Saccharomyces cerevisiae (strain ATCC 204508 / S288c) (Baker's yeast), this protein is Choline/ethanolaminephosphotransferase 1 (EPT1).